Consider the following 462-residue polypeptide: Argininosuccinate lyase (462 aa).

It belongs to the lyase 1 family. Argininosuccinate lyase subfamily.

Its subcellular location is the cytoplasm. It carries out the reaction 2-(N(omega)-L-arginino)succinate = fumarate + L-arginine. The protein operates within amino-acid biosynthesis; L-arginine biosynthesis; L-arginine from L-ornithine and carbamoyl phosphate: step 3/3. This chain is Argininosuccinate lyase, found in Xanthobacter autotrophicus (strain ATCC BAA-1158 / Py2).